Reading from the N-terminus, the 514-residue chain is 2,3-bisphosphoglycerate-independent phosphoglycerate mutase (514 aa).

Residues Asp-14 and Ser-64 each coordinate Mn(2+). Ser-64 (phosphoserine intermediate) is an active-site residue. Substrate contacts are provided by residues His-125, 155–156 (RD), Arg-187, Arg-193, 263–266 (RADR), and Lys-336. Residues Asp-403, His-407, Asp-444, His-445, and His-463 each contribute to the Mn(2+) site.

This sequence belongs to the BPG-independent phosphoglycerate mutase family. In terms of assembly, monomer. Mn(2+) serves as cofactor.

It carries out the reaction (2R)-2-phosphoglycerate = (2R)-3-phosphoglycerate. The protein operates within carbohydrate degradation; glycolysis; pyruvate from D-glyceraldehyde 3-phosphate: step 3/5. Its function is as follows. Catalyzes the interconversion of 2-phosphoglycerate and 3-phosphoglycerate. The sequence is that of 2,3-bisphosphoglycerate-independent phosphoglycerate mutase from Enterobacter sp. (strain 638).